We begin with the raw amino-acid sequence, 259 residues long: Phosphate import ATP-binding protein PstB (259 aa).

The region spanning 13-254 (IAVKNLNFFY…PTRKETEDYI (242 aa)) is the ABC transporter domain. 45 to 52 (GPSGCGKS) serves as a coordination point for ATP.

It belongs to the ABC transporter superfamily. Phosphate importer (TC 3.A.1.7) family. As to quaternary structure, the complex is composed of two ATP-binding proteins (PstB), two transmembrane proteins (PstC and PstA) and a solute-binding protein (PstS).

The protein resides in the cell inner membrane. The enzyme catalyses phosphate(out) + ATP + H2O = ADP + 2 phosphate(in) + H(+). Functionally, part of the ABC transporter complex PstSACB involved in phosphate import. Responsible for energy coupling to the transport system. The sequence is that of Phosphate import ATP-binding protein PstB from Albidiferax ferrireducens (strain ATCC BAA-621 / DSM 15236 / T118) (Rhodoferax ferrireducens).